Reading from the N-terminus, the 77-residue chain is Serine protease inhibitor 1 (77 aa).

The N-terminal stretch at 1 to 17 (MMFTPLIVLTLLVLATA) is a signal peptide. 5 disulfide bridges follow: C21–C53, C30–C48, C33–C44, C37–C74, and C55–C68. A TIL domain is found at 21–74 (CGPNEQWSDCPGCELQCGESDKPCPAMCGDPKCYCSPDQYRRIPDGRCIRKIQC).

The protein localises to the secreted. Its function is as follows. Defends the organism against the host's proteinases. In Anisakis simplex (Herring worm), this protein is Serine protease inhibitor 1.